Reading from the N-terminus, the 277-residue chain is Undecaprenyl-diphosphatase (277 aa).

6 helical membrane passes run 47–67 (FNIIIQLAAILAVVWEFRGKI), 85–105 (ANLLIAFFPAVVLGVLFADLI), 108–128 (WLFNPITVALALVVGGVVMLW), 183–203 (AATEFSFFLAMPTMVGAAVYS), 218–238 (VFAVGFVTSFVFAMVAVRALL), and 249–269 (FAWYRIAFGLLILATWQFHLI).

Belongs to the UppP family.

The protein resides in the cell inner membrane. It catalyses the reaction di-trans,octa-cis-undecaprenyl diphosphate + H2O = di-trans,octa-cis-undecaprenyl phosphate + phosphate + H(+). In terms of biological role, catalyzes the dephosphorylation of undecaprenyl diphosphate (UPP). Confers resistance to bacitracin. The protein is Undecaprenyl-diphosphatase of Pseudomonas aeruginosa (strain UCBPP-PA14).